The following is a 173-amino-acid chain: Shikimate kinase 1 (173 aa).

14-19 lines the ATP pocket; sequence GAGKST. S18 provides a ligand contact to Mg(2+). 3 residues coordinate substrate: D36, R60, and G82. R120 lines the ATP pocket. Residue R140 coordinates substrate. Q157 contributes to the ATP binding site.

This sequence belongs to the shikimate kinase family. Monomer. Requires Mg(2+) as cofactor.

Its subcellular location is the cytoplasm. It catalyses the reaction shikimate + ATP = 3-phosphoshikimate + ADP + H(+). Its pathway is metabolic intermediate biosynthesis; chorismate biosynthesis; chorismate from D-erythrose 4-phosphate and phosphoenolpyruvate: step 5/7. In terms of biological role, catalyzes the specific phosphorylation of the 3-hydroxyl group of shikimic acid using ATP as a cosubstrate. In Enterobacter sp. (strain 638), this protein is Shikimate kinase 1.